A 430-amino-acid chain; its full sequence is Enolase (430 aa).

A (2R)-2-phosphoglycerate-binding site is contributed by Gln163. Glu205 (proton donor) is an active-site residue. Mg(2+) contacts are provided by Asp242, Glu286, and Asp313. (2R)-2-phosphoglycerate contacts are provided by Lys338, Arg367, Ser368, and Lys389. Lys338 acts as the Proton acceptor in catalysis.

It belongs to the enolase family. The cofactor is Mg(2+).

The protein localises to the cytoplasm. Its subcellular location is the secreted. It localises to the cell surface. It catalyses the reaction (2R)-2-phosphoglycerate = phosphoenolpyruvate + H2O. Its pathway is carbohydrate degradation; glycolysis; pyruvate from D-glyceraldehyde 3-phosphate: step 4/5. In terms of biological role, catalyzes the reversible conversion of 2-phosphoglycerate (2-PG) into phosphoenolpyruvate (PEP). It is essential for the degradation of carbohydrates via glycolysis. This Geotalea daltonii (strain DSM 22248 / JCM 15807 / FRC-32) (Geobacter daltonii) protein is Enolase.